Reading from the N-terminus, the 588-residue chain is Zeta-carotene desaturase, chloroplastic/chromoplastic (588 aa).

It belongs to the zeta carotene desaturase family. The cofactor is NAD(+). NADP(+) is required as a cofactor. FAD serves as cofactor.

The protein resides in the plastid. The protein localises to the chloroplast. Its subcellular location is the chromoplast. The enzyme catalyses 9,9'-di-cis-zeta-carotene + 2 a quinone = 7,7',9,9'-tetra-cis-lycopene + 2 a quinol. The protein operates within carotenoid biosynthesis; lycopene biosynthesis. Functionally, catalyzes the conversion of zeta-carotene to lycopene via the intermediary of neurosporene. It carries out two consecutive desaturations (introduction of double bonds) at positions C-7 and C-7'. In Solanum lycopersicum (Tomato), this protein is Zeta-carotene desaturase, chloroplastic/chromoplastic (ZDS).